A 122-amino-acid polypeptide reads, in one-letter code: uncharacterized protein (122 aa).

The signal sequence occupies residues 1–28 (MVPGPPESVVRFFLWFCFLLPPTRKASC). The N-linked (GlcNAc...) asparagine glycan is linked to N49.

Its subcellular location is the secreted. This is an uncharacterized protein from Homo sapiens (Human).